Consider the following 222-residue polypeptide: Coiled-coil domain-containing protein 70 (222 aa).

The stretch at 129–153 (NALWERDRNLLQEDKALWEEEKALW) forms a coiled coil.

The polypeptide is Coiled-coil domain-containing protein 70 (Homo sapiens (Human)).